Reading from the N-terminus, the 506-residue chain is Histidine ammonia-lyase (506 aa).

The segment at residues A142–G144 is a cross-link (5-imidazolinone (Ala-Gly)). S143 carries the post-translational modification 2,3-didehydroalanine (Ser).

The protein belongs to the PAL/histidase family. Post-translationally, contains an active site 4-methylidene-imidazol-5-one (MIO), which is formed autocatalytically by cyclization and dehydration of residues Ala-Ser-Gly.

The protein resides in the cytoplasm. It catalyses the reaction L-histidine = trans-urocanate + NH4(+). The protein operates within amino-acid degradation; L-histidine degradation into L-glutamate; N-formimidoyl-L-glutamate from L-histidine: step 1/3. The chain is Histidine ammonia-lyase from Bacillus cereus (strain B4264).